A 265-amino-acid polypeptide reads, in one-letter code: Protein N-terminal and lysine N-methyltransferase EFM7 (265 aa).

The tract at residues methionine 1 to glutamate 25 is disordered. S-adenosyl-L-methionine-binding positions include tryptophan 67, glycine 93 to alanine 95, aspartate 115, tryptophan 152, and serine 176.

The protein belongs to the class I-like SAM-binding methyltransferase superfamily. EFM7 family.

The protein localises to the cytoplasm. Functionally, S-adenosyl-L-methionine-dependent protein methyltransferase that trimethylates the N-terminal glycine 'Gly-2' of elongation factor 1-alpha, before also catalyzing the mono- and dimethylation of 'Lys-3'. The chain is Protein N-terminal and lysine N-methyltransferase EFM7 from Eremothecium gossypii (strain ATCC 10895 / CBS 109.51 / FGSC 9923 / NRRL Y-1056) (Yeast).